A 602-amino-acid chain; its full sequence is Wings apart-like protein homolog 1 (602 aa).

The segment at 34 to 66 (NKQKRSPGQTVSKRLHKKQRVVSNPDLSLPSSP) is disordered. A compositionally biased stretch (polar residues) spans 54-66 (VVSNPDLSLPSSP). In terms of domain architecture, WAPL spans 160–492 (IQMKSIHELR…LGLVEESHEF (333 aa)).

The protein belongs to the WAPL family.

The protein localises to the nucleus. Its subcellular location is the chromosome. Functionally, regulator of sister chromatid cohesion in mitosis which negatively regulates cohesin association with chromatin. The chain is Wings apart-like protein homolog 1 (wpl1) from Schizosaccharomyces pombe (strain 972 / ATCC 24843) (Fission yeast).